We begin with the raw amino-acid sequence, 386 residues long: Histidine decarboxylase (386 aa).

His120 serves as a coordination point for substrate. N6-(pyridoxal phosphate)lysine is present on Lys233.

It belongs to the group II decarboxylase family. In terms of assembly, homotetramer. The cofactor is pyridoxal 5'-phosphate.

It carries out the reaction L-histidine + H(+) = histamine + CO2. This Vibrio campbellii (strain ATCC BAA-1116) protein is Histidine decarboxylase.